The primary structure comprises 167 residues: Signal peptidase complex catalytic subunit SEC11 (167 aa).

Over 1–9 the chain is Cytoplasmic; it reads MNLRFELQK. The helical; Signal-anchor for type II membrane protein transmembrane segment at 10–30 threads the bilayer; it reads LLNVCFLFASAYMFWQGLAIA. The Lumenal segment spans residues 31 to 167; it reads TNSASPIVVV…LGLSALLGGE (137 aa). Active-site charge relay system residues include S44, H83, and D109. Residue N121 is glycosylated (N-linked (GlcNAc...) asparagine). The segment at 153 to 164 is C-terminal short (CTS) helix; that stretch reads ALLGMLGLSALL.

This sequence belongs to the peptidase S26B family. As to quaternary structure, component of the signal peptidase complex (SPC) composed of a catalytic subunit SEC11 and three accessory subunits SPC1, SPC2 and SPC3. The complex induces a local thinning of the ER membrane which is used to measure the length of the signal peptide (SP) h-region of protein substrates. This ensures the selectivity of the complex towards h-regions shorter than 18-20 amino acids. SPC associates with the translocon complex.

The protein resides in the endoplasmic reticulum membrane. The catalysed reaction is Cleavage of hydrophobic, N-terminal signal or leader sequences from secreted and periplasmic proteins.. Its function is as follows. Catalytic component of the signal peptidase complex (SPC) which catalyzes the cleavage of N-terminal signal sequences from nascent proteins as they are translocated into the lumen of the endoplasmic reticulum. Specifically cleaves N-terminal signal peptides that contain a hydrophobic alpha-helix (h-region) shorter than 18-20 amino acids. The polypeptide is Signal peptidase complex catalytic subunit SEC11 (SEC11) (Saccharomyces cerevisiae (strain Lalvin QA23) (Baker's yeast)).